The sequence spans 121 residues: NADH-quinone oxidoreductase subunit A (121 aa).

The next 3 membrane-spanning stretches (helical) occupy residues 8–28 (YLPI…TIIG), 65–85 (LVAI…PWAI), and 93–113 (QGMI…FYII).

This sequence belongs to the complex I subunit 3 family. As to quaternary structure, NDH-1 is composed of 14 different subunits. Subunits NuoA, H, J, K, L, M, N constitute the membrane sector of the complex.

The protein resides in the cell inner membrane. It catalyses the reaction a quinone + NADH + 5 H(+)(in) = a quinol + NAD(+) + 4 H(+)(out). NDH-1 shuttles electrons from NADH, via FMN and iron-sulfur (Fe-S) centers, to quinones in the respiratory chain. The immediate electron acceptor for the enzyme in this species is believed to be a menaquinone. Couples the redox reaction to proton translocation (for every two electrons transferred, four hydrogen ions are translocated across the cytoplasmic membrane), and thus conserves the redox energy in a proton gradient. In Flavobacterium psychrophilum (strain ATCC 49511 / DSM 21280 / CIP 103535 / JIP02/86), this protein is NADH-quinone oxidoreductase subunit A.